We begin with the raw amino-acid sequence, 195 residues long: Peptidyl-tRNA hydrolase (195 aa).

Tyr17 contributes to the tRNA binding site. His22 serves as the catalytic Proton acceptor. TRNA contacts are provided by Phe68, Asn70, and Asn116.

This sequence belongs to the PTH family. In terms of assembly, monomer.

It localises to the cytoplasm. The enzyme catalyses an N-acyl-L-alpha-aminoacyl-tRNA + H2O = an N-acyl-L-amino acid + a tRNA + H(+). Hydrolyzes ribosome-free peptidyl-tRNAs (with 1 or more amino acids incorporated), which drop off the ribosome during protein synthesis, or as a result of ribosome stalling. Functionally, catalyzes the release of premature peptidyl moieties from peptidyl-tRNA molecules trapped in stalled 50S ribosomal subunits, and thus maintains levels of free tRNAs and 50S ribosomes. The protein is Peptidyl-tRNA hydrolase of Shewanella denitrificans (strain OS217 / ATCC BAA-1090 / DSM 15013).